A 535-amino-acid polypeptide reads, in one-letter code: Sucrose transport protein SUT5 (535 aa).

Topologically, residues 1-53 (MEEGRRGDREGKSAAGWTALSTTKTTLEEKRRLQANGSVGGDAGTSGFRRIVR) are cytoplasmic. Residues 54-74 (LFFACMVAGGIQYGWALQLSL) form a helical membrane-spanning segment. Residues 75–87 (LSPYSQTLGISHS) lie on the Extracellular side of the membrane. The helical transmembrane segment at 88–108 (YVSLTWICGPIAGFVVQPIVG) threads the bilayer. Over 109-122 (YYSDRCTMKMGRRR) the chain is Cytoplasmic. The chain crosses the membrane as a helical span at residues 123-143 (PFILVGCLIICISVMIIGFSA). Over 144–163 (DIGRHLGDTKEHCSTYTGPR) the chain is Extracellular. The helical transmembrane segment at 164–184 (WSAAMVYIVGFWFLDFANNTV) threads the bilayer. The Cytoplasmic segment spans residues 185–203 (QGPARAMMADLSAGHHGPN). Residues 204–224 (VGQSIFSLWMAIGSVLGYLSG) traverse the membrane as a helical segment. The Extracellular portion of the chain corresponds to 225–249 (ANGKWHEWFPWLKTAACCDACANLK). The chain crosses the membrane as a helical span at residues 250–270 (GAFFTAVLLIVVSMTVTMYLA). Residues 271-302 (DEMPLDKQDVDTSGGGGCAVFVDLFKSLRNLP) lie on the Cytoplasmic side of the membrane. Residues 303–323 (PAMFKVLAVTAVTWLSWFPFI) traverse the membrane as a helical segment. Topologically, residues 324–354 (QYNTDWMGREIYHGEPQGTAAKADVYDAGVR) are extracellular. Residues 355-375 (EGAMGLLFCSVALGVTSFVIP) form a helical membrane-spanning segment. Residues 376 to 384 (KLCRRLTSK) are Cytoplasmic-facing. The helical transmembrane segment at 385–405 (VVWSISNFLVFALMAVMVAVG) threads the bilayer. At 406-429 (MVSMRGYRPSLAAGLTGPDPTLKA) the chain is on the extracellular side. A helical transmembrane segment spans residues 430–450 (VALVVFALIGIPQAVLFSVPW). Over 451–465 (AVASEVTAEEGGGQG) the chain is Cytoplasmic. The helical transmembrane segment at 466–486 (LAIGVLNIAIVVPQLVIALTA) threads the bilayer. Residues 487–498 (GPIDGAFNKGNT) lie on the Extracellular side of the membrane. A helical membrane pass occupies residues 499 to 519 (PAFGIGGAFAFICGVLALIWL). Topologically, residues 520–535 (PKTRGVSNAAVVAGGH) are cytoplasmic.

The protein belongs to the glycoside-pentoside-hexuronide (GPH) cation symporter transporter (TC 2.A.2.4) family. Homodimer. Widely expressed. Highest expression in sink leaves and lowest in germinating seeds.

Its subcellular location is the cell membrane. It participates in glycan biosynthesis; sucrose metabolism. Functionally, responsible for the transport of sucrose into the cell, with the concomitant uptake of protons (symport system). Can also transport other glucosides such as maltose, arbutin, salicin, helicin, alpha-phenylglucoside and beta-phenylglucoside. This Oryza sativa subsp. japonica (Rice) protein is Sucrose transport protein SUT5 (SUT5).